The primary structure comprises 456 residues: Phosphomethylpyrimidine synthase (456 aa).

Residues asparagine 80, methionine 109, tyrosine 139, histidine 175, 195–197, 236–239, and glutamate 275 each bind substrate; these read SRG and DSLR. Residue histidine 279 participates in Zn(2+) binding. Residue tyrosine 302 coordinates substrate. Histidine 343 contacts Zn(2+). The [4Fe-4S] cluster site is built by cysteine 423, cysteine 426, and cysteine 431.

This sequence belongs to the ThiC family. It depends on [4Fe-4S] cluster as a cofactor.

It catalyses the reaction 5-amino-1-(5-phospho-beta-D-ribosyl)imidazole + S-adenosyl-L-methionine = 4-amino-2-methyl-5-(phosphooxymethyl)pyrimidine + CO + 5'-deoxyadenosine + formate + L-methionine + 3 H(+). Its pathway is cofactor biosynthesis; thiamine diphosphate biosynthesis. In terms of biological role, catalyzes the synthesis of the hydroxymethylpyrimidine phosphate (HMP-P) moiety of thiamine from aminoimidazole ribotide (AIR) in a radical S-adenosyl-L-methionine (SAM)-dependent reaction. This Synechococcus sp. (strain ATCC 27144 / PCC 6301 / SAUG 1402/1) (Anacystis nidulans) protein is Phosphomethylpyrimidine synthase.